Reading from the N-terminus, the 348-residue chain is Uroporphyrinogen decarboxylase (348 aa).

Substrate contacts are provided by residues 28 to 32 (RQAGR), Asp78, Tyr154, Thr209, and His325.

The protein belongs to the uroporphyrinogen decarboxylase family. In terms of assembly, homodimer.

It localises to the cytoplasm. It carries out the reaction uroporphyrinogen III + 4 H(+) = coproporphyrinogen III + 4 CO2. It participates in porphyrin-containing compound metabolism; protoporphyrin-IX biosynthesis; coproporphyrinogen-III from 5-aminolevulinate: step 4/4. Catalyzes the decarboxylation of four acetate groups of uroporphyrinogen-III to yield coproporphyrinogen-III. The sequence is that of Uroporphyrinogen decarboxylase from Rhodopseudomonas palustris (strain BisA53).